The primary structure comprises 308 residues: Phosphoribosylaminoimidazole-succinocarboxamide synthase (308 aa).

Belongs to the SAICAR synthetase family.

It catalyses the reaction 5-amino-1-(5-phospho-D-ribosyl)imidazole-4-carboxylate + L-aspartate + ATP = (2S)-2-[5-amino-1-(5-phospho-beta-D-ribosyl)imidazole-4-carboxamido]succinate + ADP + phosphate + 2 H(+). It functions in the pathway purine metabolism; IMP biosynthesis via de novo pathway; 5-amino-1-(5-phospho-D-ribosyl)imidazole-4-carboxamide from 5-amino-1-(5-phospho-D-ribosyl)imidazole-4-carboxylate: step 1/2. The polypeptide is Phosphoribosylaminoimidazole-succinocarboxamide synthase (Xanthomonas oryzae pv. oryzae (strain PXO99A)).